Reading from the N-terminus, the 200-residue chain is NADH-quinone oxidoreductase subunit B (200 aa).

The [4Fe-4S] cluster site is built by cysteine 79, cysteine 80, cysteine 144, and cysteine 174.

Belongs to the complex I 20 kDa subunit family. As to quaternary structure, NDH-1 is composed of 14 different subunits. Subunits NuoB, C, D, E, F, and G constitute the peripheral sector of the complex. The cofactor is [4Fe-4S] cluster.

Its subcellular location is the cell inner membrane. It catalyses the reaction a quinone + NADH + 5 H(+)(in) = a quinol + NAD(+) + 4 H(+)(out). Functionally, NDH-1 shuttles electrons from NADH, via FMN and iron-sulfur (Fe-S) centers, to quinones in the respiratory chain. The immediate electron acceptor for the enzyme in this species is believed to be ubiquinone. Couples the redox reaction to proton translocation (for every two electrons transferred, four hydrogen ions are translocated across the cytoplasmic membrane), and thus conserves the redox energy in a proton gradient. In Caulobacter vibrioides (strain NA1000 / CB15N) (Caulobacter crescentus), this protein is NADH-quinone oxidoreductase subunit B.